The following is a 186-amino-acid chain: Peptidyl-tRNA hydrolase (186 aa).

Tyrosine 14 is a tRNA binding site. Histidine 19 (proton acceptor) is an active-site residue. Tyrosine 64, asparagine 66, and asparagine 112 together coordinate tRNA.

It belongs to the PTH family. Monomer.

The protein localises to the cytoplasm. The enzyme catalyses an N-acyl-L-alpha-aminoacyl-tRNA + H2O = an N-acyl-L-amino acid + a tRNA + H(+). Hydrolyzes ribosome-free peptidyl-tRNAs (with 1 or more amino acids incorporated), which drop off the ribosome during protein synthesis, or as a result of ribosome stalling. Functionally, catalyzes the release of premature peptidyl moieties from peptidyl-tRNA molecules trapped in stalled 50S ribosomal subunits, and thus maintains levels of free tRNAs and 50S ribosomes. The protein is Peptidyl-tRNA hydrolase of Geobacillus kaustophilus (strain HTA426).